The following is a 322-amino-acid chain: Malate dehydrogenase (322 aa).

Residues 10–15 (GSGMIG) and D34 contribute to the NAD(+) site. Residues R83 and R89 each coordinate substrate. Residues N96 and 119-121 (ITN) each bind NAD(+). Substrate contacts are provided by N121 and R152. Residue H176 is the Proton acceptor of the active site.

This sequence belongs to the LDH/MDH superfamily. MDH type 3 family.

The enzyme catalyses (S)-malate + NAD(+) = oxaloacetate + NADH + H(+). Its function is as follows. Catalyzes the reversible oxidation of malate to oxaloacetate. The chain is Malate dehydrogenase from Mesorhizobium japonicum (strain LMG 29417 / CECT 9101 / MAFF 303099) (Mesorhizobium loti (strain MAFF 303099)).